The sequence spans 632 residues: POU domain, class 2, transcription factor 1 (632 aa).

Residues Thr-157 and Thr-163 each carry the phosphothreonine modification. The POU-specific domain occupies 167–241; it reads EEPSDLEELE…LLEKWLNDAE (75 aa). Ser-170 is modified (phosphoserine). A compositionally biased stretch (low complexity) spans 243-258; that stretch reads LSSDSTASSPSALNSP. Residues 243 to 273 form a disordered region; the sequence is LSSDSTASSPSALNSPGLGAEGLNRRRKKRT. Residues 268 to 327 constitute a DNA-binding region (homeobox); sequence RRKKRTSIETNIRVALEKSFMENQKPTSEDITLIAEQLNMEKEVIRVWFCNRRQKEKRIN. Residues Ser-274 and Ser-337 each carry the phosphoserine modification. A disordered region spans residues 385–448; it reads GTTDSTSNNT…STPLPSPLGA (64 aa). A compositionally biased stretch (low complexity) spans 394–441; the sequence is TATVISTAPPASSAVTSPSLSPSPSASASTSEASSASETSTTQTTSTP.

This sequence belongs to the POU transcription factor family. Class-2 subfamily. Interacts with POU2AF1; the interaction increases POU2F1 transactivation activity. Interacts with NR3C1, AR, PGR and HCFC1. Phosphorylated by PRKDC. Widely expressed.

It is found in the nucleus. Transcription factor that binds to the octamer motif (5'-ATTTGCAT-3') and activates the promoters of the genes for some small nuclear RNAs (snRNA) and of genes such as those for histone H2B and immunoglobulins. Modulates transcription transactivation by NR3C1, AR and PGR. This chain is POU domain, class 2, transcription factor 1 (Pou2f1), found in Rattus norvegicus (Rat).